The primary structure comprises 216 residues: Probable transaldolase (216 aa).

The Schiff-base intermediate with substrate role is filled by Lys83.

The protein belongs to the transaldolase family. Type 3B subfamily.

The protein localises to the cytoplasm. It catalyses the reaction D-sedoheptulose 7-phosphate + D-glyceraldehyde 3-phosphate = D-erythrose 4-phosphate + beta-D-fructose 6-phosphate. The protein operates within carbohydrate degradation; pentose phosphate pathway; D-glyceraldehyde 3-phosphate and beta-D-fructose 6-phosphate from D-ribose 5-phosphate and D-xylulose 5-phosphate (non-oxidative stage): step 2/3. Functionally, transaldolase is important for the balance of metabolites in the pentose-phosphate pathway. The protein is Probable transaldolase of Symbiobacterium thermophilum (strain DSM 24528 / JCM 14929 / IAM 14863 / T).